The following is a 240-amino-acid chain: 1-(5-phosphoribosyl)-5-[(5-phosphoribosylamino)methylideneamino] imidazole-4-carboxamide isomerase (240 aa).

Asp8 (proton acceptor) is an active-site residue. The active-site Proton donor is the Asp130.

The protein belongs to the HisA/HisF family.

It is found in the cytoplasm. The catalysed reaction is 1-(5-phospho-beta-D-ribosyl)-5-[(5-phospho-beta-D-ribosylamino)methylideneamino]imidazole-4-carboxamide = 5-[(5-phospho-1-deoxy-D-ribulos-1-ylimino)methylamino]-1-(5-phospho-beta-D-ribosyl)imidazole-4-carboxamide. The protein operates within amino-acid biosynthesis; L-histidine biosynthesis; L-histidine from 5-phospho-alpha-D-ribose 1-diphosphate: step 4/9. The sequence is that of 1-(5-phosphoribosyl)-5-[(5-phosphoribosylamino)methylideneamino] imidazole-4-carboxamide isomerase from Elusimicrobium minutum (strain Pei191).